Reading from the N-terminus, the 1952-residue chain is Protein ROS1A (1952 aa).

Disordered regions lie at residues 72-157 (EVVG…CRSE), 693-778 (IIRP…ESTS), 1302-1334 (HGTS…DDNV), and 1367-1398 (LIEN…AGKK). Composition is skewed to basic residues over residues 90–102 (PARK…HRPK) and 130–139 (GKRKYVRKKT). Composition is skewed to basic and acidic residues over residues 709–720 (PRTDNHQVKVSE) and 727–747 (LPEK…EKPK). Residues 769–778 (TNPLQNESTS) show a composition bias toward polar residues. Residues 1388-1398 (AKRPRVGAGKK) show a composition bias toward basic residues. Cys1582, Cys1589, Cys1592, and Cys1598 together coordinate [4Fe-4S] cluster.

Belongs to the DNA glycosylase family. DEMETER subfamily. The cofactor is [4Fe-4S] cluster. As to expression, expressed in roots, leaf blades, leaf sheaths, apical and lateral shoot meristems, inflorescence meristems, lodicules, pollen grains, ovules and seeds. Expressed in vascular tissues of roots and leaves, pollen grains, pericarp, aleurone, and starchy endosperm.

It localises to the nucleus. In terms of biological role, bifunctional DNA glycosylase/lyase, which excises 5-methylcytosine (5-meC) and 5-hydroxymethylcytosine (5-hmeC), leaving an apyrimidinic (AP) site that is subsequently incised by the lyase activity. DNA demethylase that is indispensable in both male and female gametophyte development. Involved in the regulation of DNA methylation in the promoters of RISBZ1/BZIP58 and DOF3/RPBF, two transcription factors that functions synergistically to positively regulate genes that are key players in the development of aleurone layers. Active DNA demethylation carried out by ROS1A in rice endosperms may restrict the number of aleurone cell layers. The sequence is that of Protein ROS1A from Oryza sativa subsp. japonica (Rice).